Consider the following 280-residue polypeptide: tRNA (guanine-N(1)-)-methyltransferase (280 aa).

A disordered region spans residues 71-94; that stretch reads DDVSSGTASTQDLQSALPHLSKPR. Over residues 74-84 the composition is skewed to polar residues; sequence SSGTASTQDLQ. S-adenosyl-L-methionine-binding positions include G146 and 170–175; that span reads IGDYVL.

This sequence belongs to the RNA methyltransferase TrmD family. Homodimer.

It localises to the cytoplasm. It carries out the reaction guanosine(37) in tRNA + S-adenosyl-L-methionine = N(1)-methylguanosine(37) in tRNA + S-adenosyl-L-homocysteine + H(+). Functionally, specifically methylates guanosine-37 in various tRNAs. This chain is tRNA (guanine-N(1)-)-methyltransferase, found in Corynebacterium aurimucosum (strain ATCC 700975 / DSM 44827 / CIP 107346 / CN-1) (Corynebacterium nigricans).